The primary structure comprises 301 residues: Nucleotide-binding protein MAB_2783c (301 aa).

24-31 contributes to the ATP binding site; sequence GLSGAGRG. 75–78 provides a ligand contact to GTP; sequence DVRS.

The protein belongs to the RapZ-like family.

In terms of biological role, displays ATPase and GTPase activities. The sequence is that of Nucleotide-binding protein MAB_2783c from Mycobacteroides abscessus (strain ATCC 19977 / DSM 44196 / CCUG 20993 / CIP 104536 / JCM 13569 / NCTC 13031 / TMC 1543 / L948) (Mycobacterium abscessus).